Here is a 1631-residue protein sequence, read N- to C-terminus: Ras GTPase-activating-like protein IQGAP3 (1631 aa).

A Calponin-homology (CH) domain is found at 34–149 (LCRLEEAKRW…YCIHALSLFL (116 aa)). Residue Y162 is modified to Phosphotyrosine. A Phosphoserine modification is found at S539. 4 IQ domains span residues 730-759 (NVGF…FLRT), 760-789 (WLPA…YFKA), 790-819 (NLDA…YFQK), and 820-849 (NVNS…APHP). The region spanning 1004–1253 (YLLLQLFKTA…LKFRKFIHRA (250 aa)) is the Ras-GAP domain. S1424 carries the post-translational modification Phosphoserine.

The protein is Ras GTPase-activating-like protein IQGAP3 (IQGAP3) of Homo sapiens (Human).